A 227-amino-acid polypeptide reads, in one-letter code: Protein GET1 (227 aa).

Over 1 to 3 the chain is Lumenal; the sequence is MSL. Residues 4–23 traverse the membrane as a helical segment; it reads LLTVFLIVFVTQLISWIGQN. Over 24–107 the chain is Cytoplasmic; sequence VLLEWAYNLY…SFSTKFNAVI (84 aa). The stretch at 72–96 forms a coiled coil; it reads AKLRRSVDKGLAELEKLNSEIATAK. Residues 108 to 128 traverse the membrane as a helical segment; sequence WALTSGVNLVIGWWYGRKAVF. Over 129 to 151 the chain is Lumenal; it reads YLPEGWMGPLTWWFSFPFAPRGS. A helical transmembrane segment spans residues 152-168; sequence VSVGVWSFACKRVLLVL. Topologically, residues 169–227 are cytoplasmic; that stretch reads ERMVKELFFAETQAKEVPVGFSPSSSSSSTPNPMSKASSGSPSPRRRTTVTVESEDEKS. Residues 184-227 form a disordered region; it reads EVPVGFSPSSSSSSTPNPMSKASSGSPSPRRRTTVTVESEDEKS. Low complexity predominate over residues 190-211; that stretch reads SPSSSSSSTPNPMSKASSGSPS.

This sequence belongs to the WRB/GET1 family. As to quaternary structure, interacts with GET3.

It is found in the endoplasmic reticulum membrane. Its function is as follows. Required for the post-translational delivery of tail-anchored (TA) proteins to the endoplasmic reticulum. Acts as a membrane receptor for soluble GET3, which recognizes and selectively binds the transmembrane domain of TA proteins in the cytosol. This Coprinopsis cinerea (strain Okayama-7 / 130 / ATCC MYA-4618 / FGSC 9003) (Inky cap fungus) protein is Protein GET1.